The following is a 462-amino-acid chain: Arginine-specific demethylase JMJ20 (462 aa).

The JmjC domain maps to 115–287; it reads VKEYPDYTAY…WVWDLLWKDY (173 aa). The Fe cation site is built by histidine 177, aspartate 179, and histidine 255.

Belongs to the JARID1 histone demethylase family. Requires Fe(2+) as cofactor. As to expression, mostly expressed in leaves, and, to a lower extent, in inflorescences, roots, siliques and stems.

It is found in the nucleus. The catalysed reaction is N(omega),N(omega)-dimethyl-L-arginyl-[protein] + 2-oxoglutarate + O2 = N(omega)-methyl-L-arginyl-[protein] + formaldehyde + succinate + CO2. Histone demethylase that demethylates 'Arg-3' (H4R3me) of histone H4 with a specific activity for H4R3me2. Involved in the positive regulation of gene expression. Together with JMJ22, positively regulates seed germination by promoting the removal of repressive histone arginine methylations (e.g. H4R3me2) at GA3ox1 and GA3ox2 to trigger gibberellic acid (GA) biosynthesis. The protein is Arginine-specific demethylase JMJ20 of Arabidopsis thaliana (Mouse-ear cress).